Here is a 309-residue protein sequence, read N- to C-terminus: MSIRIVPKEQLGAQREKSTTAETIPPLLFANLKSLYSRRAERLRKLATDNPLGDYLNFAAQLAEAQHHALHDNPLTLDLTEELQQGAASGKPPLDLSVFPRSEHWHKLLVSLIAELRPQAPEHILAVLDNLEKASSHELELLADALLNQDFGKIGSEKAPFIWAALSLYWAQMAGLIPGKARAEYGEHRQFCPVCGSIPVSSVVHIGTVSGLRYLHCNLCESEWHVVRIKCSNCEQTRDLNYWSLDSELAAVKAESCGDCGTYLKILYQEKDPQVEAVADDLATLVLDAKMEDEGFARSSINPFLFPGS.

The protein belongs to the FdhE family.

The protein localises to the cytoplasm. In terms of biological role, necessary for formate dehydrogenase activity. This chain is Protein FdhE homolog, found in Serratia proteamaculans (strain 568).